The primary structure comprises 542 residues: CTP synthase (542 aa).

The interval 1–264 is amidoligase domain; the sequence is MKFIFITGGV…AKLIINKLKL (264 aa). Residue Ser12 participates in CTP binding. A UTP-binding site is contributed by Ser12. 13–18 contacts ATP; sequence SLGKGI. Tyr53 serves as a coordination point for L-glutamine. Asp70 contributes to the ATP binding site. Mg(2+)-binding residues include Asp70 and Glu138. Residues 145–147, 185–190, and Lys221 contribute to the CTP site; these read DIE and KTKPTQ. Residues 185–190 and Lys221 contribute to the UTP site; that span reads KTKPTQ. 237–239 lines the ATP pocket; it reads KDA. Positions 298–541 constitute a Glutamine amidotransferase type-1 domain; it reads YIMLKDAYTS…VKSALDKKLK (244 aa). Gly359 contacts L-glutamine. The Nucleophile; for glutamine hydrolysis role is filled by Cys386. Residues 387–390, Glu410, and Arg467 each bind L-glutamine; that span reads LGMQ. Active-site residues include His514 and Glu516.

This sequence belongs to the CTP synthase family. As to quaternary structure, homotetramer.

It catalyses the reaction UTP + L-glutamine + ATP + H2O = CTP + L-glutamate + ADP + phosphate + 2 H(+). The enzyme catalyses L-glutamine + H2O = L-glutamate + NH4(+). The catalysed reaction is UTP + NH4(+) + ATP = CTP + ADP + phosphate + 2 H(+). It functions in the pathway pyrimidine metabolism; CTP biosynthesis via de novo pathway; CTP from UDP: step 2/2. Allosterically activated by GTP, when glutamine is the substrate; GTP has no effect on the reaction when ammonia is the substrate. The allosteric effector GTP functions by stabilizing the protein conformation that binds the tetrahedral intermediate(s) formed during glutamine hydrolysis. Inhibited by the product CTP, via allosteric rather than competitive inhibition. In terms of biological role, catalyzes the ATP-dependent amination of UTP to CTP with either L-glutamine or ammonia as the source of nitrogen. Regulates intracellular CTP levels through interactions with the four ribonucleotide triphosphates. The polypeptide is CTP synthase (Methanococcus aeolicus (strain ATCC BAA-1280 / DSM 17508 / OCM 812 / Nankai-3)).